The sequence spans 504 residues: Xanthotoxol synthase (504 aa).

A helical membrane pass occupies residues 3–23 (PAAIFLILAIPIASVYLLFYH). Positions 363–368 (PGPLLI) are substrate specificity. Cys-444 contacts heme.

This sequence belongs to the cytochrome P450 family. Heme serves as cofactor.

The protein resides in the microsome membrane. It carries out the reaction psoralen + reduced [NADPH--hemoprotein reductase] + O2 = xanthotoxol + oxidized [NADPH--hemoprotein reductase] + H2O + H(+). The enzyme catalyses 6-methoxycoumarin + reduced [NADPH--hemoprotein reductase] + O2 = scopoletin + oxidized [NADPH--hemoprotein reductase] + H2O + H(+). It functions in the pathway secondary metabolite biosynthesis. In terms of biological role, involved in the biosynthesis of coumarins and furanocoumarins (FCs), natural products required for defense responses against attacks by predators with potential medical and agroindustrial usages such as anticoagulant, rodenticide and artificial vanilla substitutes. Catalyzes the conversion of psoralen into xanthotoxol and of 6-methoxycoumarin into scopoletin. Can also convert with a lower efficiency scopoletin into fraxetin and 7-methoxycoumarin into daphnetin-7-methylether, and use 7-methoxy-3-methylcoumarin as substrate. The protein is Xanthotoxol synthase of Pastinaca sativa (Wild parsnip).